The primary structure comprises 240 residues: Phosphoribosylaminoimidazole-succinocarboxamide synthase (240 aa).

This sequence belongs to the SAICAR synthetase family.

The enzyme catalyses 5-amino-1-(5-phospho-D-ribosyl)imidazole-4-carboxylate + L-aspartate + ATP = (2S)-2-[5-amino-1-(5-phospho-beta-D-ribosyl)imidazole-4-carboxamido]succinate + ADP + phosphate + 2 H(+). It functions in the pathway purine metabolism; IMP biosynthesis via de novo pathway; 5-amino-1-(5-phospho-D-ribosyl)imidazole-4-carboxamide from 5-amino-1-(5-phospho-D-ribosyl)imidazole-4-carboxylate: step 1/2. The protein is Phosphoribosylaminoimidazole-succinocarboxamide synthase of Coxiella burnetii (strain RSA 493 / Nine Mile phase I).